A 119-amino-acid chain; its full sequence is uncharacterized protein (119 aa).

A signal peptide spans 1–23 (MVKWAVSILVNALLLIVIDGYID). A run of 3 helical transmembrane segments spans residues 27–47 (ISSI…NVLI), 50–70 (LLII…LFVI), and 88–108 (IDGF…HLLI).

The protein localises to the cell membrane. This is an uncharacterized protein from Bacillus subtilis (strain 168).